Consider the following 162-residue polypeptide: Dihydrofolate reductase (162 aa).

Positions 3–161 constitute a DHFR domain; sequence KITLIAACAE…TSYAFVHYLR (159 aa). Residue 7-9 coordinates substrate; that stretch reads IAA. Residues 8-9 and 16-21 contribute to the NADP(+) site; these read AA and IGAGNA. Position 29 (Asp29) interacts with substrate. Residue 45–48 coordinates NADP(+); it reads GRKT. Arg60 contributes to the substrate binding site. NADP(+) contacts are provided by residues 65–68 and 98–103; these read ISRQ and MGGAQI. Substrate is bound at residue Thr117.

It belongs to the dihydrofolate reductase family.

The catalysed reaction is (6S)-5,6,7,8-tetrahydrofolate + NADP(+) = 7,8-dihydrofolate + NADPH + H(+). The protein operates within cofactor biosynthesis; tetrahydrofolate biosynthesis; 5,6,7,8-tetrahydrofolate from 7,8-dihydrofolate: step 1/1. In terms of biological role, key enzyme in folate metabolism. Catalyzes an essential reaction for de novo glycine and purine synthesis, and for DNA precursor synthesis. This Neisseria meningitidis serogroup A / serotype 4A (strain DSM 15465 / Z2491) protein is Dihydrofolate reductase (folA).